The following is a 236-amino-acid chain: Phosphoribosylaminoimidazole-succinocarboxamide synthase (236 aa).

Belongs to the SAICAR synthetase family.

The catalysed reaction is 5-amino-1-(5-phospho-D-ribosyl)imidazole-4-carboxylate + L-aspartate + ATP = (2S)-2-[5-amino-1-(5-phospho-beta-D-ribosyl)imidazole-4-carboxamido]succinate + ADP + phosphate + 2 H(+). Its pathway is purine metabolism; IMP biosynthesis via de novo pathway; 5-amino-1-(5-phospho-D-ribosyl)imidazole-4-carboxamide from 5-amino-1-(5-phospho-D-ribosyl)imidazole-4-carboxylate: step 1/2. The chain is Phosphoribosylaminoimidazole-succinocarboxamide synthase from Pseudomonas putida (strain ATCC 700007 / DSM 6899 / JCM 31910 / BCRC 17059 / LMG 24140 / F1).